A 521-amino-acid chain; its full sequence is Glutamate--cysteine ligase (521 aa).

It belongs to the glutamate--cysteine ligase type 1 family. Type 1 subfamily.

It catalyses the reaction L-cysteine + L-glutamate + ATP = gamma-L-glutamyl-L-cysteine + ADP + phosphate + H(+). Its pathway is sulfur metabolism; glutathione biosynthesis; glutathione from L-cysteine and L-glutamate: step 1/2. This Buchnera aphidicola subsp. Baizongia pistaciae (strain Bp) protein is Glutamate--cysteine ligase (gshA).